Reading from the N-terminus, the 405-residue chain is Cysteine desulfurase IscS (405 aa).

Pyridoxal 5'-phosphate is bound by residues 75-76 (AT), N155, Q183, and 203-205 (SGH). The residue at position 206 (K206) is an N6-(pyridoxal phosphate)lysine. Residue T243 coordinates pyridoxal 5'-phosphate. The active-site Cysteine persulfide intermediate is C329. Residue C329 participates in [2Fe-2S] cluster binding.

The protein belongs to the class-V pyridoxal-phosphate-dependent aminotransferase family. NifS/IscS subfamily. In terms of assembly, homodimer. Forms a heterotetramer with IscU, interacts with other sulfur acceptors. It depends on pyridoxal 5'-phosphate as a cofactor.

It localises to the cytoplasm. It catalyses the reaction (sulfur carrier)-H + L-cysteine = (sulfur carrier)-SH + L-alanine. The protein operates within cofactor biosynthesis; iron-sulfur cluster biosynthesis. Master enzyme that delivers sulfur to a number of partners involved in Fe-S cluster assembly, tRNA modification or cofactor biosynthesis. Catalyzes the removal of elemental sulfur atoms from cysteine to produce alanine. Functions as a sulfur delivery protein for Fe-S cluster synthesis onto IscU, an Fe-S scaffold assembly protein, as well as other S acceptor proteins. The protein is Cysteine desulfurase IscS of Pseudoalteromonas translucida (strain TAC 125).